The chain runs to 780 residues: Molybdenum cofactor sulfurase (780 aa).

N6-(pyridoxal phosphate)lysine is present on K246. The active site involves C413. Residues 635–780 (LRLLRQSGQR…MTCGDVVLVE (146 aa)) enclose the MOSC domain. S734 is subject to Phosphoserine.

It belongs to the class-V pyridoxal-phosphate-dependent aminotransferase family. MOCOS subfamily. Pyridoxal 5'-phosphate is required as a cofactor.

The catalysed reaction is Mo-molybdopterin + L-cysteine + AH2 = thio-Mo-molybdopterin + L-alanine + A + H2O. In terms of biological role, sulfurates the molybdenum cofactor. Sulfation of molybdenum is essential for xanthine dehydrogenase (XDH) and aldehyde oxidase (ADO) enzymes in which molybdenum cofactor is liganded by 1 oxygen and 1 sulfur atom in active form. The chain is Molybdenum cofactor sulfurase from Drosophila yakuba (Fruit fly).